A 1030-amino-acid polypeptide reads, in one-letter code: Toll-like receptor 9 (1030 aa).

The N-terminal stretch at 1 to 24 (MGPRCTLHPLSLLVQVTALAAALA) is a signal peptide. At 25–816 (QGRLPAFLPC…LCLDETLSWN (792 aa)) the chain is on the extracellular side. Cysteine 34 and cysteine 44 are joined by a disulfide. 46 to 50 (WLFLK) is a DNA binding site. LRR repeat units lie at residues 61 to 84 (RANV…DFVH), 86 to 109 (SSLR…HFPC), 121 to 146 (VPTL…SLVS), 149 to 165 (LSRT…LTGL), 166 to 189 (HALR…ALEV), 197 to 220 (LGNL…LPPS), 222 to 241 (ETLL…DLAN), 242 to 267 (LTAL…CREC), 282 to 305 (LSRL…WFRG), 307 to 331 (DRLQ…AFQG), 332 to 355 (LARL…HLHL), 362 to 385 (LRSL…TLQP), 389 to 412 (LPML…IFGA), 414 to 439 (PGLL…TREV), 469 to 493 (CKAF…MFAR), 495 to 518 (SRLE…QFVP), 519 to 542 (LTSL…SFTE), 544 to 571 (PRLE…SFVA), 573 to 597 (LPAL…LCSA), 599 to 621 (LCAL…LYLR), 626 to 649 (LRSL…ALDN), 651 to 674 (PKSL…SLTL), 675 to 698 (LPKL…SLPS), 700 to 722 (TQLR…FFAL), 723 to 746 (AKQL…WFGS), and 748 to 771 (VGNL…TFVG). The N-linked (GlcNAc...) asparagine glycan is linked to asparagine 63. Residues 71–76 (SNRIHH) and 94–108 (KWNC…MHFP) contribute to the DNA site. A disulfide bridge connects residues cysteine 97 and cysteine 109. N-linked (GlcNAc...) asparagine glycosylation is present at asparagine 128. DNA-binding positions include tyrosine 131, arginine 151, and 178–180 (YYK). The cysteines at positions 177 and 183 are disulfide-linked. Asparagine 199 is a glycosylation site (N-linked (GlcNAc...) asparagine). Tyrosine 207 is a binding site for DNA. N-linked (GlcNAc...) asparagine glycosylation is found at asparagine 209 and asparagine 241. Cystine bridges form between cysteine 254–cysteine 267 and cysteine 257–cysteine 264. Residue cysteine 257 is the site of S-palmitoyl cysteine attachment. A DNA-binding site is contributed by arginine 261. Cysteine 264 is lipidated: S-palmitoyl cysteine. An N-linked (GlcNAc...) asparagine glycan is attached at asparagine 339. Cysteine 469 and cysteine 499 form a disulfide bridge. An N-linked (GlcNAc...) asparagine glycan is attached at asparagine 512. N-linked (GlcNAc...) asparagine glycosylation is present at asparagine 566. N-linked (GlcNAc...) asparagine glycosylation is found at asparagine 668 and asparagine 693. A glycan (N-linked (GlcNAc...) asparagine) is linked at asparagine 730. Disulfide bonds link cysteine 763-cysteine 789 and cysteine 765-cysteine 808. A helical membrane pass occupies residues 817-837 (CFGISLLAMALGLVVPMLHHL). The Cytoplasmic segment spans residues 838-1030 (CGWDLWYCFH…NFCRGPTTAE (193 aa)). One can recognise a TIR domain in the interval 865–1010 (LFYDAFVVFD…SFWAQLGTAL (146 aa)).

The protein belongs to the Toll-like receptor family. In terms of assembly, monomer and homodimer. Exists as a monomer in the absence of unmethylated cytidine-phosphate-guanosine (CpG) ligand. Proteolytic processing of an insertion loop (Z-loop) is required for homodimerization upon binding to the unmethylated CpG ligand leading to its activation. Interacts with MYD88 via their respective TIR domains. Interacts with BTK. Interacts (via transmembrane domain) with UNC93B1. Interacts with CD300LH; the interaction may promote full activation of TLR9-triggered innate responses. Interacts with CNPY3 and HSP90B1; this interaction is required for proper folding in the endoplasmic reticulum. Interacts with SMPDL3B. Interacts with CD82; this interaction is essential for TLR9-dependent myddosome formation in response to CpG stimulation. In terms of processing, activated by proteolytic cleavage of the flexible loop between repeats LRR14 and LRR15 within the ectodomain. Cleavage requires UNC93B1. Proteolytically processed by first removing the majority of the ectodomain by either asparagine endopeptidase (AEP) or a cathepsin followed by a trimming event that is solely cathepsin mediated and required for optimal receptor signaling. Palmitoylated by ZDHHC3 in the Golgi regulates TLR9 trafficking from the Golgi to endosomes. Depalmitoylation by PPT1 controls the release of TLR9 from UNC93B1 in endosomes.

The protein localises to the endoplasmic reticulum membrane. It localises to the endosome. The protein resides in the lysosome. Its subcellular location is the cytoplasmic vesicle. It is found in the phagosome. In terms of biological role, key component of innate and adaptive immunity. TLRs (Toll-like receptors) control host immune response against pathogens through recognition of molecular patterns specific to microorganisms. TLR9 is a nucleotide-sensing TLR which is activated by unmethylated cytidine-phosphate-guanosine (CpG) dinucleotides. Acts via MYD88 and TRAF6, leading to NF-kappa-B activation, cytokine secretion and the inflammatory response. Upon CpG stimulation, induces B-cell proliferation, activation, survival and antibody production. This Sus scrofa (Pig) protein is Toll-like receptor 9 (TLR9).